Here is a 97-residue protein sequence, read N- to C-terminus: Integration host factor subunit alpha (97 aa).

The protein belongs to the bacterial histone-like protein family. Heterodimer of an alpha and a beta chain.

Functionally, this protein is one of the two subunits of integration host factor, a specific DNA-binding protein that functions in genetic recombination as well as in transcriptional and translational control. In Acinetobacter baylyi (strain ATCC 33305 / BD413 / ADP1), this protein is Integration host factor subunit alpha.